Here is a 324-residue protein sequence, read N- to C-terminus: NAD(P)H-dependent D-xylose reductase xyl1 (324 aa).

Catalysis depends on Y50, which acts as the Proton donor. H112 contributes to the substrate binding site. Residues 168 to 169 (SN), 217 to 226 (SSFGPTGFME), and 273 to 283 (KTSRPEVMAQN) each bind NAD(+).

Belongs to the aldo/keto reductase family.

It carries out the reaction an alditol + NAD(+) = an aldose + NADH + H(+). The catalysed reaction is an alditol + NADP(+) = an aldose + NADPH + H(+). The enzyme catalyses xylitol + NAD(+) = D-xylose + NADH + H(+). It catalyses the reaction xylitol + NADP(+) = D-xylose + NADPH + H(+). It participates in carbohydrate metabolism; D-xylose degradation. The protein operates within carbohydrate degradation; L-arabinose degradation via L-arabinitol; D-xylulose 5-phosphate from L-arabinose (fungal route): step 1/5. In terms of biological role, catalyzes the initial reaction in the xylose utilization pathway by reducing D-xylose into xylitol. Xylose is a major component of hemicelluloses such as xylan. Most fungi utilize D-xylose via three enzymatic reactions, xylose reductase (XR), xylitol dehydrogenase (XDH), and xylulokinase, to form xylulose 5-phosphate, which enters pentose phosphate pathway. Also major aldose reductase in pentose and D-galactose catabolism. Reduces the pentose L-arabinose and the hexose D-galactose to their respective polyols. Responsible for extracellular beta-galactosidase formation and cellulase induction during growth on lactose. The sequence is that of NAD(P)H-dependent D-xylose reductase xyl1 (xyl1) from Hypocrea jecorina (Trichoderma reesei).